The primary structure comprises 514 residues: Ribonuclease Y (514 aa).

Residues Val3–Ile23 traverse the membrane as a helical segment. Positions Thr203–Leu266 constitute a KH domain. The region spanning Val330–Ala423 is the HD domain.

Belongs to the RNase Y family.

The protein localises to the cell membrane. Its function is as follows. Endoribonuclease that initiates mRNA decay. The sequence is that of Ribonuclease Y from Rubrobacter xylanophilus (strain DSM 9941 / JCM 11954 / NBRC 16129 / PRD-1).